The sequence spans 459 residues: Cysteine--tRNA ligase (459 aa).

Zn(2+) is bound at residue Cys28. The 'HIGH' region signature appears at 30–40 (VTVYDLCHIGH). The Zn(2+) site is built by Cys209, His234, and Glu238. Residues 266-270 (KMSKS) carry the 'KMSKS' region motif. Lys269 provides a ligand contact to ATP.

This sequence belongs to the class-I aminoacyl-tRNA synthetase family. As to quaternary structure, monomer. Requires Zn(2+) as cofactor.

Its subcellular location is the cytoplasm. It carries out the reaction tRNA(Cys) + L-cysteine + ATP = L-cysteinyl-tRNA(Cys) + AMP + diphosphate. The sequence is that of Cysteine--tRNA ligase from Histophilus somni (strain 129Pt) (Haemophilus somnus).